A 520-amino-acid polypeptide reads, in one-letter code: Macrophage receptor MARCO (520 aa).

Residues 1–43 (MRNKKILKEDELLSETQQAAFHQIAMEPFEINVPKPKRRNGVN) lie on the Cytoplasmic side of the membrane. The chain crosses the membrane as a helical; Signal-anchor for type II membrane protein span at residues 44–64 (FSLAVVVIYLILLTAGAGLLV). The Extracellular portion of the chain corresponds to 65-520 (VQVLNLQARL…EEDAGVECSV (456 aa)). 2 N-linked (GlcNAc...) asparagine glycosylation sites follow: Asn83 and Asn136. The tract at residues 142–423 (GMFRIKGEQG…KGERGENSVS (282 aa)) is disordered. Residues 147–419 (KGEQGAPGLQ…VKGEKGERGE (273 aa)) enclose the Collagen-like domain. 3 stretches are compositionally biased toward low complexity: residues 203 to 227 (EAGLQGPQGAPGKQGATGTPGPQGE), 290 to 345 (LAGF…PGAT), and 380 to 398 (SPGLAGPKGAPGQAGQKGD). Over residues 410–419 (VKGEKGERGE) the composition is skewed to basic and acidic residues. One can recognise an SRCR domain in the interval 424–519 (VRIVGSSNRG…HEEDAGVECS (96 aa)). 3 disulfide bridges follow: Cys447–Cys508, Cys460–Cys518, and Cys488–Cys498.

As to quaternary structure, homotrimer; disulfide-linked. Trimers may assemble in larger oligomers thus resulting in the creation of a large surface capable of interacting with very large ligands. In terms of processing, N-glycosylated. As to expression, expressed in alveolar macrophages (at protein level). Detected in macrophages from various tissues including thymus, kidney, Kupffer cells of liver, and spleen.

The protein localises to the cell membrane. Functionally, pattern recognition receptor (PRR) which binds Gram-positive and Gram-negative bacteria. Also plays a role in binding of unopsonized particles by alveolar macrophages. Binds to the secretoglobin SCGB3A2. The polypeptide is Macrophage receptor MARCO (MARCO) (Homo sapiens (Human)).